The chain runs to 228 residues: MLHRKPYSETSLLVDLFTEESGRLTVLAKGARAKRSALKSVLQPFTPLLLRWTGKSSLKILTKAEPAAIALPLQQTALFSGFYVNELITRVIEPETPNPQLFQDYLHCLTSLAVSQNFVEPALREFEFKLLNILGYGVDFLHCAGSGEPVDENMTYRYREEKGFIASLIKDNLTFFGRELIAFERQDFSEKSVLQAAKRFTRVALKPYLGNKPLKSRELFTQTILHLK.

It belongs to the RecO family.

Involved in DNA repair and RecF pathway recombination. This chain is DNA repair protein RecO, found in Mannheimia succiniciproducens (strain KCTC 0769BP / MBEL55E).